A 355-amino-acid chain; its full sequence is Beta-1,2-mannobiose phosphorylase (355 aa).

Residues Asn-31, Arg-46, Arg-89, 140–141 (ED), Lys-188, Tyr-273, and Asp-333 contribute to the beta-D-Manp-(1-&gt;2)-beta-D-Manp-(1-&gt;2)-D-Manp site.

Belongs to the glycosyl hydrolase 130 family. In terms of assembly, homodimer.

The enzyme catalyses beta-D-mannopyranosyl-(1-&gt;2)-D-mannopyranose + phosphate = alpha-D-mannose 1-phosphate + D-mannose. Its function is as follows. Catalyzes the reversible phosphorolysis of 1,2-beta-oligomannan. In phosphorolytic reactions, prefers beta-1,2-mannobiose (beta-1,2-Man2) as substrate, but can also use beta-1,2-mannotriose. This chain is Beta-1,2-mannobiose phosphorylase, found in Listeria innocua serovar 6a (strain ATCC BAA-680 / CLIP 11262).